Consider the following 433-residue polypeptide: Eukaryotic translation initiation factor 3 subunit E (433 aa).

One can recognise a PCI domain in the interval 217–390; sequence FFNHGKGRDL…GHVVMGTQPL (174 aa).

Belongs to the eIF-3 subunit E family. Component of the eukaryotic translation initiation factor 3 (eIF-3) complex.

The protein resides in the cytoplasm. In terms of biological role, component of the eukaryotic translation initiation factor 3 (eIF-3) complex, which is involved in protein synthesis of a specialized repertoire of mRNAs and, together with other initiation factors, stimulates binding of mRNA and methionyl-tRNAi to the 40S ribosome. The eIF-3 complex specifically targets and initiates translation of a subset of mRNAs involved in cell proliferation. In Anopheles gambiae (African malaria mosquito), this protein is Eukaryotic translation initiation factor 3 subunit E (eIF3-S6).